Consider the following 357-residue polypeptide: MMLPLLAVSAFASLGAAQTYTSCNPTNSLKTWSLSTDFTQGSSDGWTAISGNVTYGSNGAEFTINKRYDAPTLETNFYIFFGEVEVVMRAANGTGIVSSIVMESDDLDEIDWECTGTDTTQIQTNYFGKGNTTTYDRAIWETVSSPQDEFHTYKVVWTAAAITWYIDGTAVRTLEYADAVDGKNYPQTPMVVKLGIWAGGDPSNSEGTIEWAGGETDYDEVPFTMYVKSVNIINYNPAASYNYTDKTGSYTSIVASNSTTGSGIHSSNSVSVFAPSSSTSTFTSSRALIATASTYPASVQTSSSGVVSLSSSSASSSSAAASSTSGSASAVFTGAAVTNLPSFFFTVFFALAIALAF.

An N-terminal signal peptide occupies residues 1-17; it reads MMLPLLAVSAFASLGAA. The GH16 domain occupies 20–220; the sequence is YTSCNPTNSL…WAGGETDYDE (201 aa). Residues asparagine 52 and asparagine 92 are each glycosylated (N-linked (GlcNAc...) asparagine). Glutamate 109 serves as the catalytic Nucleophile. Glutamate 113 acts as the Proton donor in catalysis. Glutamate 113 contacts chitin. A glycan (N-linked (GlcNAc...) asparagine) is linked at asparagine 131. Chitin-binding residues include lysine 193, tryptophan 197, and threonine 208. N-linked (GlcNAc...) asparagine glycans are attached at residues asparagine 242 and asparagine 257. Glycine 326 is lipidated: GPI-anchor amidated glycine. A propeptide spans 327–357 (removed in mature form); the sequence is SASAVFTGAAVTNLPSFFFTVFFALAIALAF. A helical membrane pass occupies residues 337–357; that stretch reads VTNLPSFFFTVFFALAIALAF.

It belongs to the glycosyl hydrolase 16 family. CRH1 subfamily. The GPI-like anchor contains a phosphoceramide lipid group. The anchor position has not been determined.

The protein resides in the cell membrane. The protein localises to the secreted. Its subcellular location is the cell wall. It catalyses the reaction Random endo-hydrolysis of N-acetyl-beta-D-glucosaminide (1-&gt;4)-beta-linkages in chitin and chitodextrins.. Dual chitinase/transglycosylase that plays a role in cell wall architecture. Chitinase and transglycosylase activities are coupled. Required for the polysaccharide cross-linking at the septa and the cell wall. More specifically, transfers chitin to 1,6-beta-glucan in the cell wall. This is Crh-like protein 1 from Aspergillus fumigatus (strain ATCC MYA-4609 / CBS 101355 / FGSC A1100 / Af293) (Neosartorya fumigata).